The following is a 108-amino-acid chain: UPF0060 membrane protein YnfA (108 aa).

Residues 1–5 (MIKTT) are Periplasmic-facing. The helical transmembrane segment at 6 to 26 (LLFFATALCEIIGCFLPWLWL) threads the bilayer. The Cytoplasmic segment spans residues 27–30 (KRNA). A helical transmembrane segment spans residues 31 to 51 (SIWLLLPAGISLALFVWLLTL). The Periplasmic segment spans residues 52-60 (HPAASGRVY). Residues 61 to 81 (AAYGGVYVCTALMWLRVVDGV) form a helical membrane-spanning segment. Residues 82–84 (KLT) lie on the Cytoplasmic side of the membrane. A helical transmembrane segment spans residues 85–105 (LYDWTGALIALCGMLIIVAGW). Topologically, residues 106–108 (GRT) are periplasmic.

The protein belongs to the UPF0060 family.

It localises to the cell inner membrane. This chain is UPF0060 membrane protein YnfA, found in Escherichia coli O139:H28 (strain E24377A / ETEC).